Consider the following 102-residue polypeptide: Large ribosomal subunit protein bL21 (102 aa).

This sequence belongs to the bacterial ribosomal protein bL21 family. Part of the 50S ribosomal subunit. Contacts protein L20.

This protein binds to 23S rRNA in the presence of protein L20. This is Large ribosomal subunit protein bL21 from Oleidesulfovibrio alaskensis (strain ATCC BAA-1058 / DSM 17464 / G20) (Desulfovibrio alaskensis).